Reading from the N-terminus, the 55-residue chain is MSFEPSGPHSHRKPFGKGSRSCVSCYTFRGIIRKLMMCRRCFREYAGDIGFAIYD.

Residues 1-20 (MSFEPSGPHSHRKPFGKGSR) are disordered. Residues Cys22, Cys25, Cys38, and Cys41 each contribute to the Zn(2+) site.

It belongs to the universal ribosomal protein uS14 family. The cofactor is Zn(2+).

This chain is Small ribosomal subunit protein uS14 (RPS29), found in Encephalitozoon cuniculi (strain GB-M1) (Microsporidian parasite).